The sequence spans 364 residues: Dihydroorotate dehydrogenase (quinone) (364 aa).

FMN is bound by residues 61–65 (AGFDK) and Thr-85. A substrate-binding site is contributed by Lys-65. Residue 110-114 (NRMGF) coordinates substrate. 2 residues coordinate FMN: Asn-139 and Asn-170. Substrate is bound at residue Asn-170. Ser-173 acts as the Nucleophile in catalysis. Position 175 (Asn-175) interacts with substrate. Positions 214 and 242 each coordinate FMN. Substrate is bound at residue 243 to 244 (NT). Residues Gly-266, Gly-295, and 316–317 (YS) each bind FMN.

The protein belongs to the dihydroorotate dehydrogenase family. Type 2 subfamily. Monomer. FMN serves as cofactor.

It localises to the cell membrane. The catalysed reaction is (S)-dihydroorotate + a quinone = orotate + a quinol. Its pathway is pyrimidine metabolism; UMP biosynthesis via de novo pathway; orotate from (S)-dihydroorotate (quinone route): step 1/1. Functionally, catalyzes the conversion of dihydroorotate to orotate with quinone as electron acceptor. This is Dihydroorotate dehydrogenase (quinone) from Rhodopseudomonas palustris (strain BisB5).